A 628-amino-acid chain; its full sequence is Biosynthetic arginine decarboxylase (628 aa).

Lys-99 bears the N6-(pyridoxal phosphate)lysine mark. 279-289 (VDVGGGLGIDY) contributes to the substrate binding site.

It belongs to the Orn/Lys/Arg decarboxylase class-II family. SpeA subfamily. Mg(2+) is required as a cofactor. Requires pyridoxal 5'-phosphate as cofactor.

It catalyses the reaction L-arginine + H(+) = agmatine + CO2. Catalyzes the biosynthesis of agmatine from arginine. In Xanthomonas axonopodis pv. citri (strain 306), this protein is Biosynthetic arginine decarboxylase.